The primary structure comprises 133 residues: Interleukin-4 (133 aa).

The first 24 residues, 1–24, serve as a signal peptide directing secretion; that stretch reads MGLTYQLIPALVCLLAFTSTFVHG. 6 N-linked (GlcNAc...) asparagine glycosylation sites follow: asparagine 28, asparagine 45, asparagine 62, asparagine 84, asparagine 96, and asparagine 102. Disulfide bonds link cysteine 48/cysteine 85 and cysteine 70/cysteine 113.

Belongs to the IL-4/IL-13 family.

It is found in the secreted. Functionally, participates in at least several B-cell activation processes as well as of other cell types. It is a costimulator of DNA-synthesis. It induces the expression of class II MHC molecules on resting B-cells. It enhances both secretion and cell surface expression of IgE and IgG1. It also regulates the expression of the low affinity Fc receptor for IgE (CD23) on both lymphocytes and monocytes. Positively regulates IL31RA expression in macrophages. Stimulates autophagy in dendritic cells by interfering with mTORC1 signaling and through the induction of RUFY4. The protein is Interleukin-4 (IL4) of Felis catus (Cat).